Here is a 351-residue protein sequence, read N- to C-terminus: Histidinol-phosphate aminotransferase 1 (351 aa).

Position 210 is an N6-(pyridoxal phosphate)lysine (K210).

Belongs to the class-II pyridoxal-phosphate-dependent aminotransferase family. Histidinol-phosphate aminotransferase subfamily. Homodimer. Pyridoxal 5'-phosphate serves as cofactor.

It carries out the reaction L-histidinol phosphate + 2-oxoglutarate = 3-(imidazol-4-yl)-2-oxopropyl phosphate + L-glutamate. It functions in the pathway amino-acid biosynthesis; L-histidine biosynthesis; L-histidine from 5-phospho-alpha-D-ribose 1-diphosphate: step 7/9. This Pasteurella multocida (strain Pm70) protein is Histidinol-phosphate aminotransferase 1 (hisC1).